We begin with the raw amino-acid sequence, 614 residues long: Vitamin B12 transporter BtuB (614 aa).

The signal sequence occupies residues 1–20 (MIKKASLLTACSVTAFSAWA). The short motif at 26–33 (DTLVVTAI) is the TonB box element. In terms of domain architecture, TBDR plug spans 38–152 (PRSTVLAPTT…IGGVVNIITT (115 aa)). Residues L83, S85, N92, and 110–111 (VS) each bind cyanocob(III)alamin. A TBDR beta-barrel domain is found at 155–614 (EPGTEISAGW…EYTLSGSYTF (460 aa)). A run of 3 beta stranded transmembrane segments spans residues 158-165 (TEISAGWG), 169-178 (YQNYDVSTQQ), and 184-195 (TRVTLLGDYAHT). 4 residues coordinate Ca(2+): D199, Q211, D213, and D215. 2 beta stranded membrane passes run 217–227 (FLSKTLYGALE) and 232–248 (DAWSGFVRGYGYDNRTN). Ca(2+)-binding residues include Y249 and D250. A251 contacts cyanocob(III)alamin. D261 is a Ca(2+) binding site. Beta stranded transmembrane passes span 263-277 (RKLYSQSWDAGLRYN), 279-296 (ELIKSQLITSYSHSKDYN), 309-325 (TLDEMKQYTVQWANNVI), 328-337 (HGSIGAGVDW), 353-369 (YDQRNTGIYLTGLQQVG), 371-381 (FTFEGAARSDD), 385-400 (FGRHGTWQTSAGWEFI), 403-417 (YRFIASYGTSYKAPN), 434-443 (KSKQWEGAFE), 449-458 (VNWRISGYRN), 473-490 (YYNEGKARIKGVEATANF), 494-509 (PLTHTVSYDYVDARNA), 517-529 (RRAKQQVKYQLDW), and 535-550 (DWGITYQYLGTRYDKD). Position 309 (T309) interacts with cyanocob(III)alamin. R517 contacts cyanocob(III)alamin. Y551 contacts cyanocob(III)alamin. Beta stranded transmembrane passes span 558–572 (TVKMGGVSLWDLAVA), 585–596 (IANLFDKDYETV), and 602–614 (AGREYTLSGSYTF). The short motif at 597–614 (YGYQTAGREYTLSGSYTF) is the TonB C-terminal box element.

This sequence belongs to the TonB-dependent receptor family. BtuB (TC 1.B.14.3.1) subfamily.

It is found in the cell outer membrane. Involved in the active translocation of vitamin B12 (cyanocobalamin) across the outer membrane to the periplasmic space. It derives its energy for transport by interacting with the trans-periplasmic membrane protein TonB. In Shigella flexneri serotype 5b (strain 8401), this protein is Vitamin B12 transporter BtuB.